The chain runs to 216 residues: ATP synthase subunit a (216 aa).

7 helical membrane passes run 1–21 (MEYSHVVYALLAVALAIIFVL), 62–82 (LIAAIGLFVFFGNILGMVPGF), 88–108 (NINTNLALALLVFFYYHFEGF), 119–139 (FMGPIPLMAPFFFVVEVISHI), 149–169 (LFANMKAGALLLLTLVSLVIK), 174–194 (LVVSPVVLIFVIAIKFLAIFI), and 196–216 (TYIFMILSVVYIAGAVAHEEH).

Belongs to the ATPase A chain family. In terms of assembly, F-type ATPases have 2 components, CF(1) - the catalytic core - and CF(0) - the membrane proton channel. CF(1) has five subunits: alpha(3), beta(3), gamma(1), delta(1), epsilon(1). CF(0) has three main subunits: a(1), b(2) and c(9-12). The alpha and beta chains form an alternating ring which encloses part of the gamma chain. CF(1) is attached to CF(0) by a central stalk formed by the gamma and epsilon chains, while a peripheral stalk is formed by the delta and b chains.

Its subcellular location is the cell inner membrane. Functionally, key component of the proton channel; it plays a direct role in the translocation of protons across the membrane. This is ATP synthase subunit a from Aquifex aeolicus (strain VF5).